Here is a 466-residue protein sequence, read N- to C-terminus: 3-isopropylmalate dehydratase large subunit (466 aa).

[4Fe-4S] cluster is bound by residues Cys-347, Cys-407, and Cys-410.

It belongs to the aconitase/IPM isomerase family. LeuC type 1 subfamily. As to quaternary structure, heterodimer of LeuC and LeuD. [4Fe-4S] cluster is required as a cofactor.

It carries out the reaction (2R,3S)-3-isopropylmalate = (2S)-2-isopropylmalate. It participates in amino-acid biosynthesis; L-leucine biosynthesis; L-leucine from 3-methyl-2-oxobutanoate: step 2/4. Catalyzes the isomerization between 2-isopropylmalate and 3-isopropylmalate, via the formation of 2-isopropylmaleate. The sequence is that of 3-isopropylmalate dehydratase large subunit from Vibrio campbellii (strain ATCC BAA-1116).